The following is a 93-amino-acid chain: Large ribosomal subunit protein uL23cz/uL23cy (93 aa).

The protein belongs to the universal ribosomal protein uL23 family. Part of the 50S ribosomal subunit.

The protein resides in the plastid. The protein localises to the chloroplast. Its function is as follows. Binds to 23S rRNA. The sequence is that of Large ribosomal subunit protein uL23cz/uL23cy (rpl23-A) from Acorus calamus (Sweet flag).